A 458-amino-acid chain; its full sequence is MQLFKERRVLTVSALTALVRGLLEENFEQVWVEGEISNLACPQSGHCYFTLKDAGAQIRCVMFRGAFRSLKFTPRDGMRILTRGRLTLFEPRGEYQLVADYLEPQGIGGLQMAFIQLKEKLAKEGLFSELHKIEIPKLPRRIGIVTSPTGAAIRDILTVLNRRFTNVELLISPVRVQGEGAAREIADAIDDLNRVGNIDVMIVGRGGGSLEDLWAFNEEVVARAIHRSKVPVISAVGHEIDFTIADFVADLRAATPSAAAELVVASKKELTAEVEALSHRLHVSQQRRLERSRALVTALSRAITDPSRVLGHLAQRVDSLDARLVREAGLILDDASERIVTLTARLSRQTPALTLKRWEERLATLSLRLDHAMTRRLACAAESVGLATGTLNAVSPLATLSRGYSITRKLPARSVVTSSRQLAPGDRVEVSFAAGSALCTVEQASRESDSLTAPPRSV.

It belongs to the XseA family. As to quaternary structure, heterooligomer composed of large and small subunits.

It is found in the cytoplasm. The catalysed reaction is Exonucleolytic cleavage in either 5'- to 3'- or 3'- to 5'-direction to yield nucleoside 5'-phosphates.. Its function is as follows. Bidirectionally degrades single-stranded DNA into large acid-insoluble oligonucleotides, which are then degraded further into small acid-soluble oligonucleotides. This chain is Exodeoxyribonuclease 7 large subunit, found in Geobacter sp. (strain M21).